The sequence spans 229 residues: ABC transporter I family member 1 (229 aa).

The ABC transporter domain occupies 11 to 228; that stretch reads LLLQNVSCMR…LIDMLDRADI (218 aa). Residue 43 to 50 coordinates ATP; it reads GTNGSGKS.

Belongs to the ABC transporter superfamily. ABCI family.

It is found in the membrane. It catalyses the reaction heme b(in) + ATP + H2O = heme b(out) + ADP + phosphate + H(+). Part of the ABC transporter complex CcmAB involved in the biogenesis of c-type cytochromes; once thought to export heme, this seems not to be the case, but its exact role is uncertain. Responsible for energy coupling to the transport system. The polypeptide is ABC transporter I family member 1 (ABCI1) (Arabidopsis thaliana (Mouse-ear cress)).